The chain runs to 1351 residues: Non-structural polyprotein 1AB (1351 aa).

Residues 105–144 (LVQDHKAKTREVEDLKSQLSQLRMEHEILRHEYERLKLKS) are a coiled coil. The next 5 helical transmembrane spans lie at 153-173 (LKVLLFSLLLGLLFAGVTNGA), 231-251 (LVFQTVFNWYFCATALAVYYM), 257-277 (PIVMFVTLALATLSQFQLLAV), 304-324 (ISILVSFCVLVLSVMIGTFMA), and 337-357 (VVFAIVCYSHVAMILNIPPWV). Residues His452, Asp481, and Ser544 each act as charge relay system; for serine protease activity in the active site. The stretch at 579–635 (EVRKISKREQELEDRVKQLEGMLNMDQAYVDSNLIVDLVREAVQREMKVLRTELANL) forms a coiled coil. Tyr662 bears the O-(5'-phospho-RNA)-tyrosine mark. Residues 687 to 699 (YDDEDEQSEEEAG) are compositionally biased toward acidic residues. 2 disordered regions span residues 687-708 (YDDEDEQSEEEAGYPDWSDPGD) and 822-842 (RKRVQQPKKLQRGPEDPGPEE). Basic residues predominate over residues 822–832 (RKRVQQPKKLQ). Positions 833-842 (RGPEDPGPEE) are enriched in basic and acidic residues. Residues 1085–1217 (PYWIEFDWTR…TSPSVPNDYV (133 aa)) form the RdRp catalytic domain.

Belongs to the astroviridae polyprotein 1AB family. In terms of assembly, monomer. In terms of processing, cleaved by the viral and host proteases. The protease is probably autocatalytically cleaved.

Its subcellular location is the host membrane. It catalyses the reaction RNA(n) + a ribonucleoside 5'-triphosphate = RNA(n+1) + diphosphate. In terms of biological role, responsible for the cleavage of the polyprotein into functional products. Protein covalently attached to the 5' extremity of the genomic and subgenomic RNAs. It may serve as a primer for the replicase. The sequence is that of Non-structural polyprotein 1AB (ORF1) from Ovis aries (Sheep).